A 466-amino-acid polypeptide reads, in one-letter code: MVSQALRLLCLLLGLQGCLAAGGVAEASGGETRDMPWKPGPHRVFITQEEAHGVLHRRRRANAFLEELRPGSLERECKEEQCSFEEAREIFKDLERTKLFWISYSDGDQCASSPCQNGGSCKDQLQSYICFCLPAFEGRNCETYKDDQLICVNENGGCEQYCSDHTGTKRSCRCHEGYSLLADGVSCTPTVEYPCGKIPILENRNASKPQGRIVGGKVCPKGECPWQXLLXVNGAQLCGGTLINTIWVASAAHCFDKIKNWRNLIAVLGEHDLSEHDGDEQSRRVAQVIIPSTYIPGTTNHDIALLRLHQPVVLTDHVVPLCLPERAFSERTLAFVRFSLVSGWGQLLDRGATALELMVLNVPRLMTQDCLQQSRKVGDSPNITEYMFCAGYSDGSKDSCKGDSGGPHATHYRGTWYLTGIVSWGQGCASVGHFGVYTRVSQYIEWLQKLMRSEPRPGVLLRAPFP.

Residues 1–20 (MVSQALRLLCLLLGLQGCLA) form the signal peptide. The propeptide occupies 21–60 (AGGVAEASGGETRDMPWKPGPHRVFITQEEAHGVLHRRRR). The region spanning 61–105 (ANAFLEELRPGSLERECKEEQCSFEEAREIFKDLERTKLFWISYS) is the Gla domain. 4-carboxyglutamate occurs at positions 66, 67, 74, 76, 79, 80, 85, 86, 89, and 95. Residues Cys-77 and Cys-82 are joined by a disulfide bond. An EGF-like 1; calcium-binding domain is found at 106–142 (DGDQCASSPCQNGGSCKDQLQSYICFCLPAFEGRNCE). 10 disulfide bridges follow: Cys-110/Cys-121, Cys-115/Cys-130, Cys-132/Cys-141, Cys-151/Cys-162, Cys-158/Cys-172, Cys-174/Cys-187, Cys-195/Cys-322, Cys-219/Cys-224, Cys-238/Cys-254, and Cys-370/Cys-389. O-linked (Glc...) serine; alternate glycosylation occurs at Ser-112. Ser-112 carries O-linked (Xyl...) serine; alternate glycosylation. A glycan (O-linked (Fuc) serine) is linked at Ser-120. Position 123 is a (3R)-3-hydroxyaspartate (Asp-123). An EGF-like 2 domain is found at 147–188 (DQLICVNENGGCEQYCSDHTGTKRSCRCHEGYSLLADGVSCT). Asn-205 carries an N-linked (GlcNAc...) asparagine glycan. The Peptidase S1 domain maps to 213–452 (IVGGKVCPKG…YIEWLQKLMR (240 aa)). Active-site charge relay system residues include His-253 and Asp-302. N-linked (GlcNAc...) asparagine glycosylation occurs at Asn-382. Asp-398 provides a ligand contact to substrate. A disulfide bridge links Cys-400 with Cys-428. The Charge relay system role is filled by Ser-404.

The protein belongs to the peptidase S1 family. Heterodimer of a light chain and a heavy chain linked by a disulfide bond. The vitamin K-dependent, enzymatic carboxylation of some glutamate residues allows the modified protein to bind calcium. Post-translationally, the iron and 2-oxoglutarate dependent 3-hydroxylation of aspartate and asparagine is (R) stereospecific within EGF domains. In terms of processing, O-glycosylated. O-fucosylated by POFUT1 on a conserved serine or threonine residue found in the consensus sequence C2-X(4,5)-[S/T]-C3 of EGF domains, where C2 and C3 are the second and third conserved cysteines. Can be either O-glucosylated or O-xylosylated at Ser-112 by POGLUT1.

The protein resides in the secreted. It carries out the reaction Selective cleavage of Arg-|-Ile bond in factor X to form factor Xa.. Initiates the extrinsic pathway of blood coagulation. Serine protease that circulates in the blood in a zymogen form. Factor VII is converted to factor VIIa by factor Xa, factor XIIa, factor IXa, or thrombin by minor proteolysis. In the presence of tissue factor and calcium ions, factor VIIa then converts factor X to factor Xa by limited proteolysis. Factor VIIa also converts factor IX to factor IXa in the presence of tissue factor and calcium. The chain is Coagulation factor VII (F7) from Pan paniscus (Pygmy chimpanzee).